Reading from the N-terminus, the 117-residue chain is MTRIKRGYIARRRRTKLRLFASSFRGAHSRLTRTMTQQRIRALVSAHRDRGKRKRDFRRLWITRINAVIHEMGVFYSYNRFIHNLYKKQLLLNRKILAQIALLNRSCLYTISNEIKE.

The protein belongs to the bacterial ribosomal protein bL20 family.

It is found in the plastid. Its subcellular location is the chloroplast. Functionally, binds directly to 23S ribosomal RNA and is necessary for the in vitro assembly process of the 50S ribosomal subunit. It is not involved in the protein synthesizing functions of that subunit. The sequence is that of Large ribosomal subunit protein bL20c from Nasturtium officinale (Watercress).